A 380-amino-acid polypeptide reads, in one-letter code: Cytochrome b (380 aa).

The next 4 membrane-spanning stretches (helical) occupy residues 34–54, 78–99, 114–134, and 179–199; these read FGSLLAVCLTTQILTGLLLAM, WLIRNLHANGASFFFICIFLHI, WNTGVILLLTLMATAFVGYVL, and FFALHFLLPFVITGITITHLM. Residues His84 and His98 each contribute to the heme b site. The heme b site is built by His183 and His197. An a ubiquinone-binding site is contributed by His202. 4 helical membrane-spanning segments follow: residues 227–247, 289–309, 321–341, and 348–368; these read LKDILGLALMLTPFLTLALFS, LGGVLALAASVLILLLIPFLH, LSQALFWLLVANLLILTWVGS, and FIIIGQMASLSYFTILLILFP.

The protein belongs to the cytochrome b family. As to quaternary structure, the cytochrome bc1 complex contains 11 subunits: 3 respiratory subunits (MT-CYB, CYC1 and UQCRFS1), 2 core proteins (UQCRC1 and UQCRC2) and 6 low-molecular weight proteins (UQCRH/QCR6, UQCRB/QCR7, UQCRQ/QCR8, UQCR10/QCR9, UQCR11/QCR10 and a cleavage product of UQCRFS1). This cytochrome bc1 complex then forms a dimer. Heme b is required as a cofactor.

Its subcellular location is the mitochondrion inner membrane. Functionally, component of the ubiquinol-cytochrome c reductase complex (complex III or cytochrome b-c1 complex) that is part of the mitochondrial respiratory chain. The b-c1 complex mediates electron transfer from ubiquinol to cytochrome c. Contributes to the generation of a proton gradient across the mitochondrial membrane that is then used for ATP synthesis. In Syrmaticus reevesii (Reeves's pheasant), this protein is Cytochrome b (MT-CYB).